The sequence spans 132 residues: Ribosome-binding factor A (132 aa).

It belongs to the RbfA family. As to quaternary structure, monomer. Binds 30S ribosomal subunits, but not 50S ribosomal subunits or 70S ribosomes.

Its subcellular location is the cytoplasm. One of several proteins that assist in the late maturation steps of the functional core of the 30S ribosomal subunit. Associates with free 30S ribosomal subunits (but not with 30S subunits that are part of 70S ribosomes or polysomes). Required for efficient processing of 16S rRNA. May interact with the 5'-terminal helix region of 16S rRNA. This chain is Ribosome-binding factor A, found in Caldicellulosiruptor bescii (strain ATCC BAA-1888 / DSM 6725 / KCTC 15123 / Z-1320) (Anaerocellum thermophilum).